Reading from the N-terminus, the 247-residue chain is Geranylgeranylglyceryl phosphate synthase (247 aa).

Residues D23 and S52 each coordinate Mg(2+). Sn-glycerol 1-phosphate is bound by residues Y171–G177, G203–G204, and G225–T226.

Belongs to the GGGP/HepGP synthase family. Group II subfamily. It depends on Mg(2+) as a cofactor.

It is found in the cytoplasm. It catalyses the reaction sn-glycerol 1-phosphate + (2E,6E,10E)-geranylgeranyl diphosphate = sn-3-O-(geranylgeranyl)glycerol 1-phosphate + diphosphate. It participates in membrane lipid metabolism; glycerophospholipid metabolism. Prenyltransferase that catalyzes the transfer of the geranylgeranyl moiety of geranylgeranyl diphosphate (GGPP) to the C3 hydroxyl of sn-glycerol-1-phosphate (G1P). This reaction is the first ether-bond-formation step in the biosynthesis of archaeal membrane lipids. This is Geranylgeranylglyceryl phosphate synthase from Methanosarcina barkeri (strain Fusaro / DSM 804).